The chain runs to 451 residues: Phosphoglucosamine mutase (451 aa).

Ser101 (phosphoserine intermediate) is an active-site residue. Mg(2+) is bound by residues Ser101, Asp240, Asp242, and Asp244. Ser101 is subject to Phosphoserine.

It belongs to the phosphohexose mutase family. The cofactor is Mg(2+). Post-translationally, activated by phosphorylation.

It carries out the reaction alpha-D-glucosamine 1-phosphate = D-glucosamine 6-phosphate. Functionally, catalyzes the conversion of glucosamine-6-phosphate to glucosamine-1-phosphate. The chain is Phosphoglucosamine mutase from Streptococcus pyogenes serotype M3 (strain SSI-1).